The following is a 329-amino-acid chain: Glycerol-3-phosphate dehydrogenase [NAD(P)+] (329 aa).

2 residues coordinate NADPH: Trp11 and Lys101. Sn-glycerol 3-phosphate-binding residues include Lys101, Gly132, and Ser134. Ala136 lines the NADPH pocket. Residues Lys188, Asp241, Ser251, Arg252, and Asn253 each coordinate sn-glycerol 3-phosphate. The active-site Proton acceptor is Lys188. Arg252 lines the NADPH pocket. Val276 and Glu278 together coordinate NADPH.

The protein belongs to the NAD-dependent glycerol-3-phosphate dehydrogenase family.

Its subcellular location is the cytoplasm. It carries out the reaction sn-glycerol 3-phosphate + NAD(+) = dihydroxyacetone phosphate + NADH + H(+). The catalysed reaction is sn-glycerol 3-phosphate + NADP(+) = dihydroxyacetone phosphate + NADPH + H(+). It participates in membrane lipid metabolism; glycerophospholipid metabolism. In terms of biological role, catalyzes the reduction of the glycolytic intermediate dihydroxyacetone phosphate (DHAP) to sn-glycerol 3-phosphate (G3P), the key precursor for phospholipid synthesis. The polypeptide is Glycerol-3-phosphate dehydrogenase [NAD(P)+] (Phytoplasma australiense).